Here is a 511-residue protein sequence, read N- to C-terminus: MEEFKGYLEKSRSKQQHFLYPFLFQEYIYALAHDHGLNVNGSIFYEPAEISGYDNKFSSLLVKRLITRMYQQNYLINSVNDSNQNRFVGHNKNFYSQMISEGFAAIVEIPFSLRLASSLEEKKEIPKSQNLRSIHSIFPFFEDKLSHLNYVSDILIPYPVHLEILVQILQCWIQDVPSLHLLRFFFHEYHNWNNLITQKKSSYGFSKENPRLFWFLYNSYVVECESILVFLRKQSSYLRSTSSGPFLERTHFYEKIGQHLIVLCCNDFQKTLWLFKDPFMHYVRYQGKSILASKRTHLLMKKWKSYFVNFWQCHFHFWSQPCRIHINQFSNFSFYFLGYLSNVPINPSAVKSQMLENSFLIDTVTKKFETIVPIIPMIGSLSKAKFCNVSGNPISKPVWADLSDSDIIDRFGRICRNLSHYYSGSSKKQSLYRIKYILRLSCARTLARKHKSTVRAFLQRLGSEFLEEFFTEEEKVLSLILPRISYPLHKLYRERIWYLDIIRINDLVNHL.

This sequence belongs to the intron maturase 2 family. MatK subfamily.

The protein localises to the plastid. Its subcellular location is the chloroplast. Its function is as follows. Usually encoded in the trnK tRNA gene intron. Probably assists in splicing its own and other chloroplast group II introns. This is Maturase K from Anchomanes difformis (Amorphophallus difformis).